The following is a 311-amino-acid chain: Telomere-binding protein I1 homolog (311 aa).

It belongs to the chordopoxvirinae I1 family.

The protein localises to the virion. Its function is as follows. Late DNA-binding protein which binds to the hairpin form of the viral telomeric sequence. Required for the production of mature virions (MV). The sequence is that of Telomere-binding protein I1 homolog from Fowlpox virus (strain NVSL) (FPV).